A 412-amino-acid chain; its full sequence is Proline-rich protein 30 (412 aa).

Over residues 33–45 (HNLQPLSAHQSLR) the composition is skewed to polar residues. Disordered stretches follow at residues 33–75 (HNLQ…QFGS), 123–174 (PLTP…SNRQ), and 318–412 (PKEV…KSSV). 2 stretches are compositionally biased toward low complexity: residues 126–142 (PSFS…PHSP) and 334–350 (PSPA…ADPA). Polar residues predominate over residues 353-372 (TPSQTRSFRSAGLQSPNSPR).

The polypeptide is Proline-rich protein 30 (PRR30) (Macaca fascicularis (Crab-eating macaque)).